Here is a 153-residue protein sequence, read N- to C-terminus: 17.6 kDa class I heat shock protein (153 aa).

A sHSP domain is found at 38-153 (ETAAIVNARI…PMVKAIDISG (116 aa)).

Belongs to the small heat shock protein (HSP20) family. In terms of assembly, forms oligomeric structures.

It is found in the cytoplasm. The polypeptide is 17.6 kDa class I heat shock protein (HSP17.6) (Helianthus annuus (Common sunflower)).